The primary structure comprises 235 residues: RING-H2 finger protein ATL17 (235 aa).

A helical membrane pass occupies residues 1 to 21 (MLTTTILILLIVILMVSLHLY). The RING-type; atypical zinc-finger motif lies at 76–118 (CSVCLSEFKDNESGRVMPNCKHTFHVHCIDMWFHSHSSCPLCR). Residues 143–167 (VYGDTNHHEGTETTGDSVPEDSQRK) form a disordered region.

Belongs to the RING-type zinc finger family. ATL subfamily.

Its subcellular location is the membrane. The catalysed reaction is S-ubiquitinyl-[E2 ubiquitin-conjugating enzyme]-L-cysteine + [acceptor protein]-L-lysine = [E2 ubiquitin-conjugating enzyme]-L-cysteine + N(6)-ubiquitinyl-[acceptor protein]-L-lysine.. The protein operates within protein modification; protein ubiquitination. Functionally, may be involved in the early steps of the plant defense signaling pathway. The chain is RING-H2 finger protein ATL17 (ATL17) from Arabidopsis thaliana (Mouse-ear cress).